Reading from the N-terminus, the 511-residue chain is Lysine--tRNA ligase (511 aa).

Mg(2+) is bound by residues glutamate 422 and glutamate 429.

It belongs to the class-II aminoacyl-tRNA synthetase family. Homodimer. Mg(2+) is required as a cofactor.

It localises to the cytoplasm. The catalysed reaction is tRNA(Lys) + L-lysine + ATP = L-lysyl-tRNA(Lys) + AMP + diphosphate. This Chlorobaculum tepidum (strain ATCC 49652 / DSM 12025 / NBRC 103806 / TLS) (Chlorobium tepidum) protein is Lysine--tRNA ligase.